We begin with the raw amino-acid sequence, 121 residues long: Large ribosomal subunit protein uL14 (121 aa).

This sequence belongs to the universal ribosomal protein uL14 family. As to quaternary structure, part of the 50S ribosomal subunit. Forms a cluster with proteins L3 and L19. In the 70S ribosome, L14 and L19 interact and together make contacts with the 16S rRNA in bridges B5 and B8.

In terms of biological role, binds to 23S rRNA. Forms part of two intersubunit bridges in the 70S ribosome. This chain is Large ribosomal subunit protein uL14, found in Synechococcus elongatus (strain ATCC 33912 / PCC 7942 / FACHB-805) (Anacystis nidulans R2).